The primary structure comprises 309 residues: Postacrosomal sheath WW domain-binding protein (309 aa).

Residues 45-87 form the GRAM domain; sequence GRKTGTLFLTSYRVIFITSCSISDPMLSFMMPFDLMTNLTVEQ. A run of 10 repeats spans residues 175 to 181, 182 to 188, 189 to 195, 217 to 223, 224 to 230, 231 to 237, 238 to 244, 245 to 251, 252 to 258, and 259 to 265. Positions 175 to 265 are 10 X 7 AA tandem repeat of Y-G-X-P-P-X-G; the sequence is YGAPPAGYGA…PLGYGAPPAG (91 aa). The short motif at 186–189 is the PPxY motif element; that stretch reads PPGY. The segment covering 251–272 has biased composition (low complexity); sequence GYGAPPLGYGAPPAGNEGPPAG. The disordered stretch occupies residues 251–309; sequence GYGAPPLGYGAPPAGNEGPPAGYRASPAGSGARPQESTAAQAPENEASLPSASSSQVHS. Positions 298–309 are enriched in polar residues; that stretch reads SLPSASSSQVHS.

As to expression, expressed in testis.

Functionally, may play a role in meiotic resumption and pronuclear formation, mediated by a WW domain-signaling pathway during fertilization. This is Postacrosomal sheath WW domain-binding protein (WBP2NL) from Homo sapiens (Human).